A 145-amino-acid chain; its full sequence is 5-hydroxymethyl-dUMP N-hydrolase (145 aa).

Gly7, Ile9, Arg10, Gly11, Ser79, Gly81, Glu85, and Ser109 together coordinate 5-hydroxymethyl-dUMP.

Belongs to the 2'-deoxynucleoside 5'-phosphate N-hydrolase 1 family. In terms of assembly, monomer and homodimer.

It is found in the cytoplasm. The protein resides in the nucleus. It carries out the reaction 5-hydroxymethyl-dUMP + H2O = 5-hydroxymethyluracil + 2-deoxy-D-ribose 5-phosphate. Functionally, part of a nucleotide salvage pathway that eliminates epigenetically modified 5-hydroxymethyl-dCMP (hmdCMP) in a two-step process entailing deamination to cytotoxic 5-hydroxymethyl-dUMP (hmdUMP), followed by its hydrolysis into 5-hydroxymethyluracil (hmU) and 2-deoxy-D-ribose 5-phosphate (deoxyribosephosphate). Catalyzes the second step in that pathway, the hydrolysis of the N-glycosidic bond in hmdUMP, degrading this cytotoxic nucleotide to avoid its genomic integration. In Esox lucius (Northern pike), this protein is 5-hydroxymethyl-dUMP N-hydrolase.